Here is an 88-residue protein sequence, read N- to C-terminus: UPF0250 protein bbp_432 (88 aa).

This sequence belongs to the UPF0250 family.

This Buchnera aphidicola subsp. Baizongia pistaciae (strain Bp) protein is UPF0250 protein bbp_432.